Consider the following 557-residue polypeptide: MRSDMIKKGFDKAPHRSLLKATGLKDEDFDKPFIAICNSFIEIIPGHKHLNEFGKLVKEAVRAAGMVPFEFNTIGVDDGIAMGHIGMRYSLPSREIIADSVETVVNAHWFDGMICIPNCDKITPGMMMAALRINIPTVFVSGGPMAAGKTSKGEVVDLSSVFEGVGAYQSGKISEEELKDIEDHGCPSCGSCSGMFTANSMNCLCEVLGLALPGNGSILAIDPRREELIKEAAEKLKILIERDIKPRDIVTEEAIDDAFALDMAMGGSTNTVLHTLALAHEAGLDYDMSRIDAVSRRVPHLCKVSPASNWHMEDIDRAGGISAILKEMSRKEGVLHLDRITATGQTLRGNIAHAEIKDKEVIHSLENPHSEEGGLRILKGNLAKDGAVIKSGATEVKRFEGPCVIFNSQDEALAGIMLGKVKKGDVVVIRYEGPRGGPGMPEMLAPTSAIAGMGLGADVALLTDGRFSGASRGISVGHISPEAAAGGTIALLEQGDIVCIDVEERLLEVRVSDEELDKRKKEWKRPEPKVKTGWLGRYAQMVTSANTGAVLKVPNFD.

Residue Asp78 participates in Mg(2+) binding. Cys119 lines the [2Fe-2S] cluster pocket. 2 residues coordinate Mg(2+): Asp120 and Lys121. Lys121 carries the post-translational modification N6-carboxylysine. Residue Cys192 participates in [2Fe-2S] cluster binding. Residue Glu442 participates in Mg(2+) binding. The active-site Proton acceptor is Ser468.

It belongs to the IlvD/Edd family. Homodimer. [2Fe-2S] cluster is required as a cofactor. Requires Mg(2+) as cofactor.

It carries out the reaction (2R)-2,3-dihydroxy-3-methylbutanoate = 3-methyl-2-oxobutanoate + H2O. The catalysed reaction is (2R,3R)-2,3-dihydroxy-3-methylpentanoate = (S)-3-methyl-2-oxopentanoate + H2O. The protein operates within amino-acid biosynthesis; L-isoleucine biosynthesis; L-isoleucine from 2-oxobutanoate: step 3/4. It participates in amino-acid biosynthesis; L-valine biosynthesis; L-valine from pyruvate: step 3/4. Functionally, functions in the biosynthesis of branched-chain amino acids. Catalyzes the dehydration of (2R,3R)-2,3-dihydroxy-3-methylpentanoate (2,3-dihydroxy-3-methylvalerate) into 2-oxo-3-methylpentanoate (2-oxo-3-methylvalerate) and of (2R)-2,3-dihydroxy-3-methylbutanoate (2,3-dihydroxyisovalerate) into 2-oxo-3-methylbutanoate (2-oxoisovalerate), the penultimate precursor to L-isoleucine and L-valine, respectively. This is Dihydroxy-acid dehydratase from Bacillus cereus (strain ZK / E33L).